Consider the following 385-residue polypeptide: S-adenosylmethionine synthase (385 aa).

His16 contacts ATP. A Mg(2+)-binding site is contributed by Asp18. Glu44 is a K(+) binding site. Glu57 and Gln100 together coordinate L-methionine. Residues Gln100–Arg110 are flexible loop. Residues Asp164 to Lys166, Lys230 to Phe231, Asp239, Arg245 to Lys246, Ala262, and Lys266 each bind ATP. Asp239 provides a ligand contact to L-methionine. Lys270 is an L-methionine binding site.

It belongs to the AdoMet synthase family. In terms of assembly, homotetramer; dimer of dimers. It depends on Mg(2+) as a cofactor. The cofactor is K(+).

The protein localises to the cytoplasm. The catalysed reaction is L-methionine + ATP + H2O = S-adenosyl-L-methionine + phosphate + diphosphate. The protein operates within amino-acid biosynthesis; S-adenosyl-L-methionine biosynthesis; S-adenosyl-L-methionine from L-methionine: step 1/1. Its function is as follows. Catalyzes the formation of S-adenosylmethionine (AdoMet) from methionine and ATP. The overall synthetic reaction is composed of two sequential steps, AdoMet formation and the subsequent tripolyphosphate hydrolysis which occurs prior to release of AdoMet from the enzyme. In Helicobacter pylori (strain ATCC 700392 / 26695) (Campylobacter pylori), this protein is S-adenosylmethionine synthase.